A 117-amino-acid chain; its full sequence is Hemerythrin subunit beta (117 aa).

His24, His53, Glu57, His72, His76, His105, and Asp110 together coordinate Fe cation.

It belongs to the hemerythrin family. In terms of assembly, octamer composed of two types of chains: alpha and beta.

Its function is as follows. Hemerythrin is a respiratory protein in blood cells of certain marine worms. The oxygen-binding site in each chain contains two iron atoms. This Lingula reevii (Inarticulated brachiopod) protein is Hemerythrin subunit beta.